The following is a 42-amino-acid chain: Photosystem I reaction center subunit IX (42 aa).

Residues Tyr7–Ile27 traverse the membrane as a helical segment.

It belongs to the PsaJ family.

It localises to the plastid. Its subcellular location is the chloroplast thylakoid membrane. May help in the organization of the PsaE and PsaF subunits. The polypeptide is Photosystem I reaction center subunit IX (Psilotum nudum (Whisk fern)).